We begin with the raw amino-acid sequence, 473 residues long: Glucose-1-phosphate adenylyltransferase small subunit, chloroplastic/amyloplastic (473 aa).

The segment at 1 to 36 (MDVPLASKTFPSPSPSKREQCNIDGHKSSSKHADLN) is disordered. Basic and acidic residues predominate over residues 16 to 36 (SKREQCNIDGHKSSSKHADLN).

It belongs to the bacterial/plant glucose-1-phosphate adenylyltransferase family. As to quaternary structure, heterotetramer. In terms of tissue distribution, abundantly expressed in the whole grains, a slightly less abundant expression is seen in leaves, while a low level expression is seen in the roots. A greater expression is seen in the endosperm than in the embryo and pericarp layers.

It localises to the plastid. The protein resides in the chloroplast. The protein localises to the amyloplast. The enzyme catalyses alpha-D-glucose 1-phosphate + ATP + H(+) = ADP-alpha-D-glucose + diphosphate. It participates in glycan biosynthesis; starch biosynthesis. Insensitive to 3'phosphoglycerate and orthophosphate. This protein plays a role in synthesis of starch. It catalyzes the synthesis of the activated glycosyl donor, ADP-glucose from Glc-1-P and ATP. This is Glucose-1-phosphate adenylyltransferase small subunit, chloroplastic/amyloplastic (AGP-S) from Triticum aestivum (Wheat).